The following is a 55-amino-acid chain: Large ribosomal subunit protein bL33 (55 aa).

Belongs to the bacterial ribosomal protein bL33 family.

The chain is Large ribosomal subunit protein bL33 from Xanthobacter autotrophicus (strain ATCC BAA-1158 / Py2).